A 255-amino-acid chain; its full sequence is Homeobox protein DLX-1 (255 aa).

Over residues 1 to 14 (MTMTTMPESLNSPV) the composition is skewed to polar residues. 2 disordered regions span residues 1-38 (MTMTTMPESLNSPVSGKAVFMEFGPPNQQMSPSPMSHG) and 95-118 (SLAQSRLEDPGADSEKSTVVEGGE). The segment covering 25-36 (PPNQQMSPSPMS) has biased composition (low complexity). Residues 100–112 (RLEDPGADSEKST) show a composition bias toward basic and acidic residues. The segment at residues 128–187 (IRKPRTIYSSLQLQALNRRFQQTQYLALPERAELAASLGLTQTQVKIWFQNKRSKFKKLM) is a DNA-binding region (homeobox). The disordered stretch occupies residues 204–230 (ALSAGSPPVPPGWNPNSSSGKGSGGNA).

The protein belongs to the distal-less homeobox family. As to quaternary structure, interacts with SMAD4 (via homeobox DNA-binding domain). Interacts (via homeobox DNA-binding domain) with POU4F2; this interaction suppresses DLX1-mediated transcriptional activity in postnatal retina and enhances retinal ganglion cell (RGC) differentiation. As to expression, expressed in hematopoietic cell lines.

It localises to the nucleus. In terms of biological role, plays a role as a transcriptional activator or repressor. Inhibits several cytokine signaling pathways, such as TGFB1, activin-A/INHBA and BMP4 by interfering with the transcriptional stimulatory activity of transcription factors, such as MSX2, FAST2, SMAD2 and SMAD3 during hematopoietic cell differentiation. Plays a role in terminal differentiation of interneurons, such as amacrine and bipolar cells in the developing retina. Likely to play a regulatory role in the development of the ventral forebrain. May play a role in craniofacial patterning and morphogenesis and may be involved in the early development of diencephalic subdivisions. This chain is Homeobox protein DLX-1 (DLX1), found in Homo sapiens (Human).